The following is a 154-amino-acid chain: Deoxyuridine 5'-triphosphate nucleotidohydrolase (154 aa).

Substrate-binding positions include 64-66 (RSG), asparagine 77, 81-83 (TVD), and lysine 91. Positions 135–154 (LADTTRGDGGHGSSGGHASL) are disordered. The segment covering 144–154 (GHGSSGGHASL) has biased composition (gly residues).

It belongs to the dUTPase family. As to quaternary structure, homotrimer. Mg(2+) is required as a cofactor.

It carries out the reaction dUTP + H2O = dUMP + diphosphate + H(+). It participates in pyrimidine metabolism; dUMP biosynthesis; dUMP from dCTP (dUTP route): step 2/2. Functionally, this enzyme is involved in nucleotide metabolism: it produces dUMP, the immediate precursor of thymidine nucleotides and it decreases the intracellular concentration of dUTP so that uracil cannot be incorporated into DNA. The polypeptide is Deoxyuridine 5'-triphosphate nucleotidohydrolase (Mycolicibacterium vanbaalenii (strain DSM 7251 / JCM 13017 / BCRC 16820 / KCTC 9966 / NRRL B-24157 / PYR-1) (Mycobacterium vanbaalenii)).